Consider the following 261-residue polypeptide: 5'-nucleotidase SurE (261 aa).

Asp8, Asp9, Ser39, and Asn91 together coordinate a divalent metal cation.

It belongs to the SurE nucleotidase family. Requires a divalent metal cation as cofactor.

Its subcellular location is the cytoplasm. The catalysed reaction is a ribonucleoside 5'-phosphate + H2O = a ribonucleoside + phosphate. Nucleotidase that shows phosphatase activity on nucleoside 5'-monophosphates. This chain is 5'-nucleotidase SurE, found in Polaromonas naphthalenivorans (strain CJ2).